Here is a 155-residue protein sequence, read N- to C-terminus: Aspartate carbamoyltransferase regulatory chain (155 aa).

4 residues coordinate Zn(2+): Cys110, Cys115, Cys139, and Cys142.

It belongs to the PyrI family. In terms of assembly, contains catalytic and regulatory chains. Zn(2+) is required as a cofactor.

Its function is as follows. Involved in allosteric regulation of aspartate carbamoyltransferase. This chain is Aspartate carbamoyltransferase regulatory chain, found in Yersinia pseudotuberculosis serotype IB (strain PB1/+).